A 565-amino-acid polypeptide reads, in one-letter code: NAD-dependent malic enzyme (565 aa).

The Proton donor role is filled by Tyr-104. Arg-157 is an NAD(+) binding site. Residue Lys-175 is the Proton acceptor of the active site. A divalent metal cation contacts are provided by Glu-246, Asp-247, and Asp-270. Residues Asp-270 and Asn-418 each coordinate NAD(+).

The protein belongs to the malic enzymes family. As to quaternary structure, homotetramer. It depends on Mg(2+) as a cofactor. Mn(2+) is required as a cofactor.

It carries out the reaction (S)-malate + NAD(+) = pyruvate + CO2 + NADH. The enzyme catalyses oxaloacetate + H(+) = pyruvate + CO2. This chain is NAD-dependent malic enzyme, found in Escherichia coli (strain K12 / MC4100 / BW2952).